Reading from the N-terminus, the 81-residue chain is Omega-conotoxin-like 3 (81 aa).

An N-terminal signal peptide occupies residues 1 to 22 (MKLTCMMIVAVLFLTASIFITA). The propeptide occupies 23-51 (DNSRNGIENLPRMRRHEMKKPKASKLNKR). Disulfide bonds link Cys53-Cys71, Cys60-Cys75, and Cys70-Cys79.

It belongs to the conotoxin O1 superfamily. In terms of tissue distribution, expressed by the venom duct.

It is found in the secreted. Omega-conotoxins act at presynaptic membranes, they bind and block voltage-gated calcium channels (Cav). The polypeptide is Omega-conotoxin-like 3 (Conus imperialis (Imperial cone)).